The primary structure comprises 185 residues: NAD(P)H-dependent FMN reductase PA1204 (185 aa).

FMN is bound by residues 13–20 (SLRSGSYN) and 81–83 (YNY). Position 115-122 (115-122 (SAGRFGTA)) interacts with NAD(+).

It belongs to the SsuE family. In terms of assembly, homodimer. FMN serves as cofactor.

Functionally, has NAD(P)H-dependent FMN reductase activity. This Pseudomonas aeruginosa (strain ATCC 15692 / DSM 22644 / CIP 104116 / JCM 14847 / LMG 12228 / 1C / PRS 101 / PAO1) protein is NAD(P)H-dependent FMN reductase PA1204.